A 316-amino-acid polypeptide reads, in one-letter code: Thymidylate synthase (316 aa).

DUMP-binding positions include R23 and 178–179 (RR). C198 (nucleophile) is an active-site residue. Residues 218–221 (RSAD), N229, and 259–261 (HLY) contribute to the dUMP site. Residue D221 coordinates (6R)-5,10-methylene-5,6,7,8-tetrahydrofolate. A315 provides a ligand contact to (6R)-5,10-methylene-5,6,7,8-tetrahydrofolate.

The protein belongs to the thymidylate synthase family. Bacterial-type ThyA subfamily. Homodimer.

The protein localises to the cytoplasm. The enzyme catalyses dUMP + (6R)-5,10-methylene-5,6,7,8-tetrahydrofolate = 7,8-dihydrofolate + dTMP. The protein operates within pyrimidine metabolism; dTTP biosynthesis. Functionally, catalyzes the reductive methylation of 2'-deoxyuridine-5'-monophosphate (dUMP) to 2'-deoxythymidine-5'-monophosphate (dTMP) while utilizing 5,10-methylenetetrahydrofolate (mTHF) as the methyl donor and reductant in the reaction, yielding dihydrofolate (DHF) as a by-product. This enzymatic reaction provides an intracellular de novo source of dTMP, an essential precursor for DNA biosynthesis. This chain is Thymidylate synthase, found in Lacticaseibacillus paracasei (strain ATCC 334 / BCRC 17002 / CCUG 31169 / CIP 107868 / KCTC 3260 / NRRL B-441) (Lactobacillus paracasei).